The following is a 260-amino-acid chain: Methylesterase 7 (260 aa).

Ser-84 serves as the catalytic Acyl-ester intermediate. Active-site charge relay system residues include Asp-210 and His-238.

This sequence belongs to the AB hydrolase superfamily. Methylesterase family.

The enzyme catalyses methyl (indol-3-yl)acetate + H2O = (indol-3-yl)acetate + methanol + H(+). It catalyses the reaction methyl salicylate + H2O = salicylate + methanol + H(+). Its pathway is plant hormone biosynthesis. Esterase activity is down-regulated by salicylic acid (SA). In terms of biological role, methylesterase shown to have carboxylesterase activity, methyl indole-3-acetic acid (MeIAA) esterase activity and methyl salicylate (MeSA) esterase activity in vitro. Required to convert methyl salicylate (MeSA) to salicylic acid (SA) as part of the signal transduction pathways that activate systemic acquired resistance in systemic tissue. MeSA is believed to be an inactive form that needs to be demethylated to exert a biological effect. The sequence is that of Methylesterase 7 from Arabidopsis thaliana (Mouse-ear cress).